Reading from the N-terminus, the 938-residue chain is AP-2 complex subunit alpha-2 (938 aa).

A 1,2-diacyl-sn-glycero-3-phospho-(1D-myo-inositol-3,4,5-trisphosphate) is bound by residues 11–12 (RG), K43, Y53, and 57–61 (KYVCK). A disordered region spans residues 615 to 681 (LKKKKGPSTV…TGPPPSSGGG (67 aa)). Residues 646 to 667 (PASTSAASTPSPSADLLGLGAV) are compositionally biased toward low complexity. Pro residues predominate over residues 668–677 (PPAPTGPPPS).

This sequence belongs to the adaptor complexes large subunit family. Adaptor protein complex 2 (AP-2) is a heterotetramer composed of two large adaptins (alpha-type subunit AP2A1 or AP2A2 and beta-type subunit AP2B1), a medium adaptin (mu-type subunit AP2M1) and a small adaptin (sigma-type subunit AP2S1). Interacts with clathrin. Binds EPN1, EPS15, AMPH, SNAP91 and BIN1. Interacts with HIP1. Interacts with DGKD. Interacts with DENND1A, DENND1B and DENND1C. Interacts with FCHO1 and DAB2. Interacts with ATAT1; this interaction is required for efficient alpha-tubulin acetylation by ATAT1. Interacts with KIAA1107. Together with AP2B1 and AP2M1, it interacts with ADAM10; this interaction facilitates ADAM10 endocytosis from the plasma membrane during long-term potentiation in hippocampal neurons. Interacts with CLN3 (via dileucine motif). Interacts with ABCB11; this interaction regulates cell membrane expression of ABCB11 through its internalization in a clathrin-dependent manner and its subsequent degradation. Interacts with Cacfd1. Interacts with DNAJC6. In terms of tissue distribution, widely expressed.

The protein localises to the cell membrane. The protein resides in the membrane. Its subcellular location is the coated pit. Functionally, component of the adaptor protein complex 2 (AP-2). Adaptor protein complexes function in protein transport via transport vesicles in different membrane traffic pathways. Adaptor protein complexes are vesicle coat components and appear to be involved in cargo selection and vesicle formation. AP-2 is involved in clathrin-dependent endocytosis in which cargo proteins are incorporated into vesicles surrounded by clathrin (clathrin-coated vesicles, CCVs) which are destined for fusion with the early endosome. The clathrin lattice serves as a mechanical scaffold but is itself unable to bind directly to membrane components. Clathrin-associated adaptor protein (AP) complexes which can bind directly to both the clathrin lattice and to the lipid and protein components of membranes are considered to be the major clathrin adaptors contributing the CCV formation. AP-2 also serves as a cargo receptor to selectively sort the membrane proteins involved in receptor-mediated endocytosis. AP-2 seems to play a role in the recycling of synaptic vesicle membranes from the presynaptic surface. AP-2 recognizes Y-X-X-[FILMV] (Y-X-X-Phi) and [ED]-X-X-X-L-[LI] endocytosis signal motifs within the cytosolic tails of transmembrane cargo molecules. AP-2 may also play a role in maintaining normal post-endocytic trafficking through the ARF6-regulated, non-clathrin pathway. During long-term potentiation in hippocampal neurons, AP-2 is responsible for the endocytosis of ADAM10. The AP-2 alpha subunit binds polyphosphoinositide-containing lipids, positioning AP-2 on the membrane. The AP-2 alpha subunit acts via its C-terminal appendage domain as a scaffolding platform for endocytic accessory proteins. The AP-2 alpha and AP-2 sigma subunits are thought to contribute to the recognition of the [ED]-X-X-X-L-[LI] motif. This chain is AP-2 complex subunit alpha-2, found in Rattus norvegicus (Rat).